We begin with the raw amino-acid sequence, 287 residues long: Toxin zeta (287 aa).

ATP is bound at residue 40-47 (GQPGSGKT). Residues 250 to 287 (MVQNQHQETPEFKAIQQKMESLQPPTPPIPKTPKLPGI) form a disordered region. Pro residues predominate over residues 273–287 (PPTPPIPKTPKLPGI).

Belongs to the zeta toxin family. In the presence of the epsilon antitoxin, forms an inactive PezA(2)PezT(2) heterotetramer.

The enzyme catalyses UDP-N-acetyl-alpha-D-glucosamine + ATP = UDP-N-acetyl-alpha-D-glucosamine 3'-phosphate + ADP + H(+). Functionally, toxic component of a type II toxin-antitoxin (TA) system. Phosphorylates UDP-N-acetyl-D-glucosamine (UNAG) on the 3'-hydroxyl group of the N-acetyl-D-glucosamine moiety, yielding UNAG-3P. UNAG-3P inhibits MurA, the first committed step in cell wall synthesis, which is then blocked. Phosphorylation is inhibited by cognate epsilon antitoxin. Part of a postsegregational killing (PSK) system involved in the killing of plasmid-free cells. The zeta toxin induces programmed cell death. This Streptococcus agalactiae protein is Toxin zeta.